Here is a 418-residue protein sequence, read N- to C-terminus: Triacylglycerol lipase 2 (418 aa).

A signal peptide spans 1 to 31; the sequence is MAGSVMVPSVSIGLALSVLIFFALSLKTLEA. N-linked (GlcNAc...) asparagine glycosylation occurs at Asn158. Catalysis depends on Ser190, which acts as the Nucleophile. N-linked (GlcNAc...) asparagine glycosylation is found at Asn286 and Asn342. Active-site charge relay system residues include Asp360 and His393.

This sequence belongs to the AB hydrolase superfamily. Lipase family.

It is found in the secreted. The catalysed reaction is a triacylglycerol + H2O = a diacylglycerol + a fatty acid + H(+). Functionally, triacylglycerol (TAG) lipase. May be involved for TAG storage breakdown during seed germination. The polypeptide is Triacylglycerol lipase 2 (LIP2) (Arabidopsis thaliana (Mouse-ear cress)).